The sequence spans 693 residues: DNA ligase (693 aa).

Residues 35 to 39 (DAEYD), 84 to 85 (SI), and E121 each bind NAD(+). K123 (N6-AMP-lysine intermediate) is an active-site residue. NAD(+)-binding residues include R144, E180, K297, and K321. C418, C421, C436, and C442 together coordinate Zn(2+). Positions 601 to 690 (PASGSVAGLT…EQSPINNKDG (90 aa)) constitute a BRCT domain.

It belongs to the NAD-dependent DNA ligase family. LigA subfamily. Requires Mg(2+) as cofactor. Mn(2+) is required as a cofactor.

It catalyses the reaction NAD(+) + (deoxyribonucleotide)n-3'-hydroxyl + 5'-phospho-(deoxyribonucleotide)m = (deoxyribonucleotide)n+m + AMP + beta-nicotinamide D-nucleotide.. Functionally, DNA ligase that catalyzes the formation of phosphodiester linkages between 5'-phosphoryl and 3'-hydroxyl groups in double-stranded DNA using NAD as a coenzyme and as the energy source for the reaction. It is essential for DNA replication and repair of damaged DNA. This chain is DNA ligase, found in Azoarcus sp. (strain BH72).